Consider the following 131-residue polypeptide: D-ribose pyranase (131 aa).

Residue His20 is the Proton donor of the active site. Residues Asp28, His98, and 120 to 122 (YSN) each bind substrate.

This sequence belongs to the RbsD / FucU family. RbsD subfamily. As to quaternary structure, homodecamer.

The protein localises to the cytoplasm. The enzyme catalyses beta-D-ribopyranose = beta-D-ribofuranose. It participates in carbohydrate metabolism; D-ribose degradation; D-ribose 5-phosphate from beta-D-ribopyranose: step 1/2. Its function is as follows. Catalyzes the interconversion of beta-pyran and beta-furan forms of D-ribose. The polypeptide is D-ribose pyranase (Lactiplantibacillus plantarum (strain ATCC BAA-793 / NCIMB 8826 / WCFS1) (Lactobacillus plantarum)).